The sequence spans 106 residues: GQPKAAPSVTLFPPSSEELQANKATLVCLISDFYPGAVKVAWKADGSPVNTGVETTTPSKQSNNKYAASSYLSLTPEQWKSHRSYSCQVTHEGSTVEKTVAPAECS.

In terms of domain architecture, Ig-like spans 7–101 (PSVTLFPPSS…EGSTVEKTVA (95 aa)). The cysteines at positions 28 and 87 are disulfide-linked.

In terms of assembly, immunoglobulins are composed of two identical heavy chains and two identical light chains; disulfide-linked.

It is found in the secreted. Its subcellular location is the cell membrane. Functionally, constant region of immunoglobulin light chains. Immunoglobulins, also known as antibodies, are membrane-bound or secreted glycoproteins produced by B lymphocytes. In the recognition phase of humoral immunity, the membrane-bound immunoglobulins serve as receptors which, upon binding of a specific antigen, trigger the clonal expansion and differentiation of B lymphocytes into immunoglobulins-secreting plasma cells. Secreted immunoglobulins mediate the effector phase of humoral immunity, which results in the elimination of bound antigens. The antigen binding site is formed by the variable domain of one heavy chain, together with that of its associated light chain. Thus, each immunoglobulin has two antigen binding sites with remarkable affinity for a particular antigen. The variable domains are assembled by a process called V-(D)-J rearrangement and can then be subjected to somatic hypermutations which, after exposure to antigen and selection, allow affinity maturation for a particular antigen. The sequence is that of Immunoglobulin lambda constant 6 from Homo sapiens (Human).